The primary structure comprises 616 residues: ATP-dependent zinc metalloprotease FtsH (616 aa).

At 1 to 8 the chain is on the cytoplasmic side; sequence MRNLFKTA. The helical transmembrane segment at 9 to 29 threads the bilayer; the sequence is TIYILIALVILLLVDIFSGGL. Residues 30–114 are Extracellular-facing; sequence SYNQFFSNLS…VTKEPPQVPW (85 aa). Residues 115-135 traverse the membrane as a helical segment; that stretch reads WLSTFLPMLIFAGLMIFVWIF. Over 136–616 the chain is Cytoplasmic; the sequence is MLQQTQGGGS…VFEDAQPQLV (481 aa). 208–215 is an ATP binding site; the sequence is GPPGTGKT. Residue His-430 participates in Zn(2+) binding. Residue Glu-431 is part of the active site. Zn(2+)-binding residues include His-434 and Asp-506.

It in the central section; belongs to the AAA ATPase family. The protein in the C-terminal section; belongs to the peptidase M41 family. As to quaternary structure, homohexamer. The cofactor is Zn(2+).

It localises to the cell membrane. Functionally, acts as a processive, ATP-dependent zinc metallopeptidase for both cytoplasmic and membrane proteins. Plays a role in the quality control of integral membrane proteins. This is ATP-dependent zinc metalloprotease FtsH from Caldicellulosiruptor bescii (strain ATCC BAA-1888 / DSM 6725 / KCTC 15123 / Z-1320) (Anaerocellum thermophilum).